We begin with the raw amino-acid sequence, 467 residues long: ATP synthase subunit beta (467 aa).

150–157 (GGAGVGKT) contacts ATP.

This sequence belongs to the ATPase alpha/beta chains family. F-type ATPases have 2 components, CF(1) - the catalytic core - and CF(0) - the membrane proton channel. CF(1) has five subunits: alpha(3), beta(3), gamma(1), delta(1), epsilon(1). CF(0) has three main subunits: a(1), b(2) and c(9-12). The alpha and beta chains form an alternating ring which encloses part of the gamma chain. CF(1) is attached to CF(0) by a central stalk formed by the gamma and epsilon chains, while a peripheral stalk is formed by the delta and b chains.

It is found in the cell inner membrane. It carries out the reaction ATP + H2O + 4 H(+)(in) = ADP + phosphate + 5 H(+)(out). Produces ATP from ADP in the presence of a proton gradient across the membrane. The catalytic sites are hosted primarily by the beta subunits. This chain is ATP synthase subunit beta, found in Polaromonas sp. (strain JS666 / ATCC BAA-500).